The primary structure comprises 108 residues: UPF0060 membrane protein RHOS4_03690 (108 aa).

4 helical membrane passes run 5–25 (LAAYAGAALAEIAGCFAVWAW), 32–52 (ALWLVPGALSLGTFAWLLALT), 62–82 (AVYGGVYVAASLLWLWAVEGV), and 86–106 (RWDMGGAALVLAGAAVILWAP).

Belongs to the UPF0060 family.

The protein resides in the cell inner membrane. This chain is UPF0060 membrane protein RHOS4_03690, found in Cereibacter sphaeroides (strain ATCC 17023 / DSM 158 / JCM 6121 / CCUG 31486 / LMG 2827 / NBRC 12203 / NCIMB 8253 / ATH 2.4.1.) (Rhodobacter sphaeroides).